Here is a 416-residue protein sequence, read N- to C-terminus: Tryptophan synthase beta chain (416 aa).

The residue at position 109 (Lys109) is an N6-(pyridoxal phosphate)lysine.

Belongs to the TrpB family. As to quaternary structure, tetramer of two alpha and two beta chains. Pyridoxal 5'-phosphate serves as cofactor.

It catalyses the reaction (1S,2R)-1-C-(indol-3-yl)glycerol 3-phosphate + L-serine = D-glyceraldehyde 3-phosphate + L-tryptophan + H2O. It functions in the pathway amino-acid biosynthesis; L-tryptophan biosynthesis; L-tryptophan from chorismate: step 5/5. In terms of biological role, the beta subunit is responsible for the synthesis of L-tryptophan from indole and L-serine. The protein is Tryptophan synthase beta chain of Mesorhizobium japonicum (strain LMG 29417 / CECT 9101 / MAFF 303099) (Mesorhizobium loti (strain MAFF 303099)).